A 425-amino-acid polypeptide reads, in one-letter code: Metalloprotease AF_0655 (425 aa).

It belongs to the peptidase U62 family.

Its function is as follows. Probable metalloprotease. The polypeptide is Metalloprotease AF_0655 (Archaeoglobus fulgidus (strain ATCC 49558 / DSM 4304 / JCM 9628 / NBRC 100126 / VC-16)).